The following is a 349-amino-acid chain: DNA polymerase IV (349 aa).

Positions 7–188 (IIHIDMDYFF…LPVKKLFGVG (182 aa)) constitute a UmuC domain. Positions 11 and 106 each coordinate Mg(2+). Residue Glu-107 is part of the active site.

It belongs to the DNA polymerase type-Y family. Monomer. The cofactor is Mg(2+).

Its subcellular location is the cytoplasm. The enzyme catalyses DNA(n) + a 2'-deoxyribonucleoside 5'-triphosphate = DNA(n+1) + diphosphate. Poorly processive, error-prone DNA polymerase involved in untargeted mutagenesis. Copies undamaged DNA at stalled replication forks, which arise in vivo from mismatched or misaligned primer ends. These misaligned primers can be extended by PolIV. Exhibits no 3'-5' exonuclease (proofreading) activity. May be involved in translesional synthesis, in conjunction with the beta clamp from PolIII. The polypeptide is DNA polymerase IV (Francisella tularensis subsp. holarctica (strain FTNF002-00 / FTA)).